Consider the following 452-residue polypeptide: Elongation factor Tu, mitochondrial (452 aa).

A mitochondrion-targeting transit peptide spans 1–43 (MAAATLLRATPRFSGLCASPTPFLQGRLRPLKAPASPFLCRGL). Residues 55–251 (KPHVNVGTIG…AVDTYIPVPT (197 aa)) form the tr-type G domain. A G1 region spans residues 64–71 (GHVDHGKT). GTP-binding residues include D67, G69, K70, T71, and T72. A Mg(2+)-binding site is contributed by T71. An N6-acetyllysine modification is found at K79. Position 88 is an N6-acetyllysine; alternate (K88). At K88 the chain carries N6-succinyllysine; alternate. The G2 stretch occupies residues 105 to 109 (GITIN). The G3 stretch occupies residues 126–129 (DCPG). N181, D184, S219, A220, and L221 together coordinate GTP. Positions 181-184 (NKAD) are G4. Residues 219-221 (SAL) form a G5 region. Position 234 is an N6-succinyllysine (K234). At K256 the chain carries N6-acetyllysine. Phosphothreonine is present on T278. Residue K286 is modified to N6-succinyllysine. S312 carries the post-translational modification Phosphoserine. N6-acetyllysine occurs at positions 361 and 418.

The protein belongs to the TRAFAC class translation factor GTPase superfamily. Classic translation factor GTPase family. EF-Tu/EF-1A subfamily. As to quaternary structure, interacts with NLRX1. Interacts with ATG16L1.

The protein resides in the mitochondrion. It carries out the reaction GTP + H2O = GDP + phosphate + H(+). Its function is as follows. GTP hydrolase that promotes the GTP-dependent binding of aminoacyl-tRNA to the A-site of ribosomes during protein biosynthesis. Also plays a role in the regulation of autophagy and innate immunity. Recruits ATG5-ATG12 and NLRX1 at mitochondria and serves as a checkpoint of the RIGI-MAVS pathway. In turn, inhibits RLR-mediated type I interferon while promoting autophagy. This is Elongation factor Tu, mitochondrial (Tufm) from Mus musculus (Mouse).